Here is a 477-residue protein sequence, read N- to C-terminus: MAAKRPAAGEGGGKAAAGAAAAKKRVALVNITNVAAAANNAKFNSATWAAPVKKGSLASGRNVCTNRVSAVKSASAKPAPAISRHESAPQKESVIPPKVLSIVPTAAPAPVTVPCSSFVSPMHSGDSVSVDETMSMCDSMKSPDFEYIDNGDSSSVLGSLQRRANENLRISEDRDVEETKWNKDAPSPMEIDQICDVDNNYEDPQLCATLASDIYMHLREAETRKRPSTDFMETIQKDVNPSMRAILIDWLVEVAEEYRLVPDTLYLTVNYIDRYLSGNEINRQRLQLLGVACMLIAAKYEEICAPQVEEFCYITDNTYFRDEVLEMEASVLNYLKFEVTAPTAKCFLRRFVRVAQVSDEDPALHLEFLANYVAELSLLEYNLLSYPPSLVAASAIFLAKFILQPTKHPWNSTLAHYTQYKSSELSDCVKALHRLFSVGPGSNLPAIREKYTQHKKFVAKKHCPPSVPSEFFRDATC.

This sequence belongs to the cyclin family. Cyclin AB subfamily.

In Oryza sativa subsp. japonica (Rice), this protein is Cyclin-A1-2 (CYCA1-2).